The primary structure comprises 106 residues: Urease subunit beta (106 aa).

Belongs to the urease beta subunit family. Heterotrimer of UreA (gamma), UreB (beta) and UreC (alpha) subunits. Three heterotrimers associate to form the active enzyme.

Its subcellular location is the cytoplasm. The enzyme catalyses urea + 2 H2O + H(+) = hydrogencarbonate + 2 NH4(+). The protein operates within nitrogen metabolism; urea degradation; CO(2) and NH(3) from urea (urease route): step 1/1. This is Urease subunit beta from Prochlorococcus marinus (strain AS9601).